A 250-amino-acid polypeptide reads, in one-letter code: tRNA pseudouridine synthase A (250 aa).

The active-site Nucleophile is Asp-52. Substrate is bound at residue Tyr-111.

It belongs to the tRNA pseudouridine synthase TruA family. As to quaternary structure, homodimer.

The catalysed reaction is uridine(38/39/40) in tRNA = pseudouridine(38/39/40) in tRNA. Functionally, formation of pseudouridine at positions 38, 39 and 40 in the anticodon stem and loop of transfer RNAs. The sequence is that of tRNA pseudouridine synthase A from Methylorubrum extorquens (strain PA1) (Methylobacterium extorquens).